Consider the following 332-residue polypeptide: Probable class II chitinase ARB_00204 (332 aa).

Residues 1–18 (MKTPFTILAALTVATTLA) form the signal peptide. One can recognise a GH18 domain in the interval 19-331 (DVPDEWDIIE…NPHRKYLDSF (313 aa)). Glu-118 functions as the Proton donor in the catalytic mechanism. Residue Asn-245 is glycosylated (N-linked (GlcNAc...) asparagine).

Belongs to the glycosyl hydrolase 18 family. Chitinase class II subfamily.

Its subcellular location is the secreted. It catalyses the reaction Random endo-hydrolysis of N-acetyl-beta-D-glucosaminide (1-&gt;4)-beta-linkages in chitin and chitodextrins.. Its function is as follows. Degrades chitin and chitotriose. The sequence is that of Probable class II chitinase ARB_00204 from Arthroderma benhamiae (strain ATCC MYA-4681 / CBS 112371) (Trichophyton mentagrophytes).